We begin with the raw amino-acid sequence, 331 residues long: Lipoyl synthase (331 aa).

The [4Fe-4S] cluster site is built by cysteine 57, cysteine 62, cysteine 68, cysteine 83, cysteine 87, cysteine 90, and serine 294. In terms of domain architecture, Radical SAM core spans 69-283 (WEDREATFLI…KAEAEAIGFL (215 aa)).

The protein belongs to the radical SAM superfamily. Lipoyl synthase family. [4Fe-4S] cluster is required as a cofactor.

It localises to the cytoplasm. The catalysed reaction is [[Fe-S] cluster scaffold protein carrying a second [4Fe-4S](2+) cluster] + N(6)-octanoyl-L-lysyl-[protein] + 2 oxidized [2Fe-2S]-[ferredoxin] + 2 S-adenosyl-L-methionine + 4 H(+) = [[Fe-S] cluster scaffold protein] + N(6)-[(R)-dihydrolipoyl]-L-lysyl-[protein] + 4 Fe(3+) + 2 hydrogen sulfide + 2 5'-deoxyadenosine + 2 L-methionine + 2 reduced [2Fe-2S]-[ferredoxin]. The protein operates within protein modification; protein lipoylation via endogenous pathway; protein N(6)-(lipoyl)lysine from octanoyl-[acyl-carrier-protein]: step 2/2. Its function is as follows. Catalyzes the radical-mediated insertion of two sulfur atoms into the C-6 and C-8 positions of the octanoyl moiety bound to the lipoyl domains of lipoate-dependent enzymes, thereby converting the octanoylated domains into lipoylated derivatives. The sequence is that of Lipoyl synthase from Clavibacter michiganensis subsp. michiganensis (strain NCPPB 382).